We begin with the raw amino-acid sequence, 254 residues long: MVIANSNIIFVAGLGGIGLDTSREIVKSGPKNLVLLDRIDNPAAINELRALNPKVTVTFYSYDVTVPLAETKKLLKTIFDKLKTVDLLINGAGILDDHQIERTIAVNFTGTVNTTTAIMDFWDKRKGGPGGIVANICSVTGFNSIYQVPVYSASKAAALSFTGSIAKLAPITGVTAYSINPGITKTVLVHKFNSWLNVEPRVAELLLDHPTQTTVQCAQNFVKAIEANENGAIWQLDLGRLEAIEWTKHWDSRI.

10–33 (FVAGLGGIGLDTSREIVKSGPKNL) is a binding site for NAD(+). Residue Ser138 participates in substrate binding. Catalysis depends on Tyr151, which acts as the Proton acceptor.

It belongs to the short-chain dehydrogenases/reductases (SDR) family. In terms of assembly, homodimer.

The catalysed reaction is a primary alcohol + NAD(+) = an aldehyde + NADH + H(+). It carries out the reaction a secondary alcohol + NAD(+) = a ketone + NADH + H(+). The sequence is that of Alcohol dehydrogenase (Adh) from Drosophila nigra (Fruit fly).